A 300-amino-acid chain; its full sequence is Transcription factor E2F5 (300 aa).

A DNA-binding region spans residues 2-73; the sequence is GSSRHEKSLG…KNSIQWKGVG (72 aa). The segment at 31–53 is leucine-zipper; sequence LKAAADTLAVRQKRRIYDITNVL. The DEF box motif lies at 36–73; the sequence is DTLAVRQKRRIYDITNVLEGIDLIEKKSKNSIQWKGVG. Residues 74–170 are dimerization; it reads AGCNTKEVID…GQNGQKKYQI (97 aa). The segment at 191-250 is disordered; it reads SKPVVFPVPPPDDLTQPSSQSSTSVTPPKSTMAAQNLPEQHVSERSQNFQQTPATEISSG. Residues 203-221 are compositionally biased toward low complexity; that stretch reads DLTQPSSQSSTSVTPPKST. The segment covering 235–246 has biased composition (polar residues); sequence RSQNFQQTPATE. The tract at residues 242–300 is transactivation; the sequence is TPATEISSGSISGDIIDELMSSDVFPLLRLSPTPADDYNFNLDDNEGVCDLFDVQILNY. An RBL2 association region spans residues 277–294; sequence DDYNFNLDDNEGVCDLFD.

It belongs to the E2F/DP family. Component of the DRTF1/E2F transcription factor complex. Binds cooperatively with DP-1 to E2F sites. Interaction with retinoblastoma protein RB1 or proteins RBL1 and RBL2 inhibits the E2F transactivation domain. Component of the DREAM complex (also named LINC complex) at least composed of E2F4, E2F5, LIN9, LIN37, LIN52, LIN54, MYBL1, MYBL2, RBL1, RBL2, RBBP4, TFDP1 and TFDP2. The complex exists in quiescent cells where it represses cell cycle-dependent genes. It dissociates in S phase when LIN9, LIN37, LIN52 and LIN54 form a subcomplex that binds to MYBL2. In terms of tissue distribution, found in placenta followed by kidney, lung and brain.

The protein localises to the nucleus. Transcriptional activator that binds to E2F sites, these sites are present in the promoter of many genes whose products are involved in cell proliferation. May mediate growth factor-initiated signal transduction. It is likely involved in the early responses of resting cells to growth factor stimulation. Specifically required for multiciliate cell differentiation: together with MCIDAS and E2F5, binds and activate genes required for centriole biogenesis. In Rattus norvegicus (Rat), this protein is Transcription factor E2F5 (E2f5).